A 404-amino-acid chain; its full sequence is Probable tRNA sulfurtransferase (404 aa).

One can recognise a THUMP domain in the interval 60-165 (TAVAESLKQV…EEAAYLSYET (106 aa)). Residues 183–184 (ML), 208–209 (HF), arginine 265, glycine 287, and glutamine 296 contribute to the ATP site.

This sequence belongs to the ThiI family.

It localises to the cytoplasm. It carries out the reaction [ThiI sulfur-carrier protein]-S-sulfanyl-L-cysteine + a uridine in tRNA + 2 reduced [2Fe-2S]-[ferredoxin] + ATP + H(+) = [ThiI sulfur-carrier protein]-L-cysteine + a 4-thiouridine in tRNA + 2 oxidized [2Fe-2S]-[ferredoxin] + AMP + diphosphate. It catalyses the reaction [ThiS sulfur-carrier protein]-C-terminal Gly-Gly-AMP + S-sulfanyl-L-cysteinyl-[cysteine desulfurase] + AH2 = [ThiS sulfur-carrier protein]-C-terminal-Gly-aminoethanethioate + L-cysteinyl-[cysteine desulfurase] + A + AMP + 2 H(+). Its pathway is cofactor biosynthesis; thiamine diphosphate biosynthesis. In terms of biological role, catalyzes the ATP-dependent transfer of a sulfur to tRNA to produce 4-thiouridine in position 8 of tRNAs, which functions as a near-UV photosensor. Also catalyzes the transfer of sulfur to the sulfur carrier protein ThiS, forming ThiS-thiocarboxylate. This is a step in the synthesis of thiazole, in the thiamine biosynthesis pathway. The sulfur is donated as persulfide by IscS. This is Probable tRNA sulfurtransferase from Streptococcus pneumoniae serotype 2 (strain D39 / NCTC 7466).